The chain runs to 218 residues: Octanoyltransferase (218 aa).

One can recognise a BPL/LPL catalytic domain in the interval 32-214 (ALTPDEIWLV…HFTQLLGYND (183 aa)). Residues 71–78 (RGGQITYH), 143–145 (SLG), and 156–158 (GLA) each bind substrate. Cys174 acts as the Acyl-thioester intermediate in catalysis.

The protein belongs to the LipB family.

The protein resides in the cytoplasm. The catalysed reaction is octanoyl-[ACP] + L-lysyl-[protein] = N(6)-octanoyl-L-lysyl-[protein] + holo-[ACP] + H(+). It functions in the pathway protein modification; protein lipoylation via endogenous pathway; protein N(6)-(lipoyl)lysine from octanoyl-[acyl-carrier-protein]: step 1/2. Its function is as follows. Catalyzes the transfer of endogenously produced octanoic acid from octanoyl-acyl-carrier-protein onto the lipoyl domains of lipoate-dependent enzymes. Lipoyl-ACP can also act as a substrate although octanoyl-ACP is likely to be the physiological substrate. The polypeptide is Octanoyltransferase (Histophilus somni (strain 129Pt) (Haemophilus somnus)).